Consider the following 1002-residue polypeptide: SIT4-associating protein SAP155 (1002 aa).

Disordered stretches follow at residues 51–131 (GTSD…APMM), 214–273 (QQQL…ANED), 609–645 (EQLK…ESDY), 868–901 (DNTT…GGGQ), and 940–1002 (NTEN…YDHE). Ser58 is subject to Phosphoserine. Residues 62-97 (EYSHGDEVKTARGDQKSRFEKDDQQERYEKEEEERS) are compositionally biased toward basic and acidic residues. The segment covering 98-114 (MNSSESSTTSFSSGSTS) has biased composition (low complexity). The span at 220–241 (SSQEDVYVESDTEQEEEKEDDN) shows a compositional bias: acidic residues. Ser255 is subject to Phosphoserine. A compositionally biased stretch (acidic residues) spans 262 to 273 (NNNDDDDDANED). The span at 609-626 (EQLKTKHSPTRDTDHDLK) shows a compositional bias: basic and acidic residues. A phosphothreonine mark is found at Thr613 and Thr618. The segment covering 635-645 (DNNDNDDESDY) has biased composition (acidic residues). Residues 868-885 (DNTTVLTPNGDASNNNEI) are compositionally biased toward polar residues. Low complexity predominate over residues 956–976 (SNSNINNTNHNSNNSNNNDNN). Residues 991–1002 (EDADNDNDYDHE) are compositionally biased toward acidic residues.

The protein belongs to the SAPS family. As to quaternary structure, associates with the SIT4 protein phosphatase catalytic subunit in a cell-cycle-dependent manner. Hyperphosphorylated in the absence of SIT4.

The protein localises to the cytoplasm. Functionally, positive regulator of protein phosphatase SIT4. Involved in directing expression of TOR-repressed genes and in dephosphorylation of NPR1 in response to nutrient starvation. Negatively modulates K(+) efflux of the cell by the Na(+)-K(+)/H(+) antiporter NHA1. The chain is SIT4-associating protein SAP155 (SAP155) from Saccharomyces cerevisiae (strain ATCC 204508 / S288c) (Baker's yeast).